Reading from the N-terminus, the 490-residue chain is ATP synthase subunit beta (490 aa).

173-180 (GGAGVGKT) contributes to the ATP binding site.

This sequence belongs to the ATPase alpha/beta chains family. As to quaternary structure, F-type ATPases have 2 components, CF(1) - the catalytic core - and CF(0) - the membrane proton channel. CF(1) has five subunits: alpha(3), beta(3), gamma(1), delta(1), epsilon(1). CF(0) has three main subunits: a(1), b(2) and c(9-12). The alpha and beta chains form an alternating ring which encloses part of the gamma chain. CF(1) is attached to CF(0) by a central stalk formed by the gamma and epsilon chains, while a peripheral stalk is formed by the delta and b chains.

Its subcellular location is the cell membrane. The enzyme catalyses ATP + H2O + 4 H(+)(in) = ADP + phosphate + 5 H(+)(out). Its function is as follows. Produces ATP from ADP in the presence of a proton gradient across the membrane. The catalytic sites are hosted primarily by the beta subunits. The protein is ATP synthase subunit beta of Bifidobacterium longum subsp. infantis (strain ATCC 15697 / DSM 20088 / JCM 1222 / NCTC 11817 / S12).